We begin with the raw amino-acid sequence, 91 residues long: Virion membrane protein A14 homolog (91 aa).

The Intravirion portion of the chain corresponds to M1–S12. The helical transmembrane segment at Y13–L33 threads the bilayer. The Virion surface portion of the chain corresponds to S34–S46. Residues I47 to G67 traverse the membrane as a helical segment. Residues Y68–Q91 are Intravirion-facing.

The protein belongs to the chordopoxvirinae A14 family. As to quaternary structure, homodimer; disulfide-linked. Interacts with A17. Post-translationally, phosphorylated by viral F10 kinase, phosphorylation state is regulated by H1 phosphatase.

The protein localises to the virion membrane. Its function is as follows. Envelope protein which is a major component of the mature virion (MV) membrane. Essential for membrane biogenesis. Is required, together with A17, to form bona fide crescents, which can progress to form the immature virion (IV) membrane. A14 and A17 form a lattice that is stabilized by disulfide bonds and serves as an anchor within the viral membrane to which several other proteins important in virion structure and morphogenesis attach. This chain is Virion membrane protein A14 homolog, found in Fowlpox virus (strain NVSL) (FPV).